Reading from the N-terminus, the 395-residue chain is Carbohydrate sulfotransferase 5 (395 aa).

Topologically, residues 1–7 (MRLPRFS) are cytoplasmic. The helical; Signal-anchor for type II membrane protein transmembrane segment at 8–26 (STVMLSLLMVQTGILVFLV) threads the bilayer. Over 27-395 (SRQVPSSPAG…ASSTEKQPES (369 aa)) the chain is Lumenal. 49 to 55 (WRSGSSF) is a binding site for 3'-phosphoadenylyl sulfate. N-linked (GlcNAc...) asparagine glycans are attached at residues Asn116 and Asn142. Residue 202–210 (RDPRAVLRS) coordinates 3'-phosphoadenylyl sulfate. N-linked (GlcNAc...) asparagine glycans are attached at residues Asn229 and Asn305.

It belongs to the sulfotransferase 1 family. Gal/GlcNAc/GalNAc subfamily. As to expression, expressed in cornea.

It is found in the golgi apparatus membrane. Its function is as follows. Sulfotransferase that utilizes 3'-phospho-5'-adenylyl sulfate (PAPS) as sulfonate donor to catalyze the transfer of sulfate to position 6 of non-reducing N-acetylglucosamine (GlcNAc) residues of keratan. Mediates sulfation of keratan in cornea. Keratan sulfate plays a central role in maintaining corneal transparency. Acts on the non-reducing terminal GlcNAc of short and long carbohydrate substrates that have poly-N-acetyllactosamine structures. May also have activity toward O-linked sugars of mucin-type acceptors. In Mus musculus (Mouse), this protein is Carbohydrate sulfotransferase 5 (Chst5).